A 198-amino-acid chain; its full sequence is Holliday junction branch migration complex subunit RuvA (198 aa).

The segment at M1–H63 is domain I. Positions T64–K142 are domain II. Positions A143–K147 are flexible linker. Residues A148–G198 are domain III.

Belongs to the RuvA family. In terms of assembly, homotetramer. Forms an RuvA(8)-RuvB(12)-Holliday junction (HJ) complex. HJ DNA is sandwiched between 2 RuvA tetramers; dsDNA enters through RuvA and exits via RuvB. An RuvB hexamer assembles on each DNA strand where it exits the tetramer. Each RuvB hexamer is contacted by two RuvA subunits (via domain III) on 2 adjacent RuvB subunits; this complex drives branch migration. In the full resolvosome a probable DNA-RuvA(4)-RuvB(12)-RuvC(2) complex forms which resolves the HJ.

Its subcellular location is the cytoplasm. Its function is as follows. The RuvA-RuvB-RuvC complex processes Holliday junction (HJ) DNA during genetic recombination and DNA repair, while the RuvA-RuvB complex plays an important role in the rescue of blocked DNA replication forks via replication fork reversal (RFR). RuvA specifically binds to HJ cruciform DNA, conferring on it an open structure. The RuvB hexamer acts as an ATP-dependent pump, pulling dsDNA into and through the RuvAB complex. HJ branch migration allows RuvC to scan DNA until it finds its consensus sequence, where it cleaves and resolves the cruciform DNA. This chain is Holliday junction branch migration complex subunit RuvA, found in Streptococcus pyogenes serotype M28 (strain MGAS6180).